We begin with the raw amino-acid sequence, 399 residues long: Beta sliding clamp (399 aa).

This sequence belongs to the beta sliding clamp family. In terms of assembly, forms a ring-shaped head-to-tail homodimer around DNA which binds and tethers DNA polymerases and other proteins to the DNA. The DNA replisome complex has a single clamp-loading complex (3 tau and 1 each of delta, delta', psi and chi subunits) which binds 3 Pol III cores (1 core on the leading strand and 2 on the lagging strand) each with a beta sliding clamp dimer. Additional proteins in the replisome are other copies of gamma, psi and chi, Ssb, DNA helicase and RNA primase.

The protein resides in the cytoplasm. Its function is as follows. Confers DNA tethering and processivity to DNA polymerases and other proteins. Acts as a clamp, forming a ring around DNA (a reaction catalyzed by the clamp-loading complex) which diffuses in an ATP-independent manner freely and bidirectionally along dsDNA. Initially characterized for its ability to contact the catalytic subunit of DNA polymerase III (Pol III), a complex, multichain enzyme responsible for most of the replicative synthesis in bacteria; Pol III exhibits 3'-5' exonuclease proofreading activity. The beta chain is required for initiation of replication as well as for processivity of DNA replication. The protein is Beta sliding clamp (dnaN) of Mycolicibacterium paratuberculosis (strain ATCC BAA-968 / K-10) (Mycobacterium paratuberculosis).